Consider the following 451-residue polypeptide: uncharacterized protein (451 aa).

The TRAM domain maps to 1–59 (MLHKNDIIETEISDISHEGMGIAKVDGFVFFVENALPGEIIKMRVLKLRKRIGYGKVEE). Residues glutamine 283, tyrosine 312, glutamate 333, and aspartate 381 each coordinate S-adenosyl-L-methionine. Cysteine 408 acts as the Nucleophile in catalysis.

This sequence belongs to the class I-like SAM-binding methyltransferase superfamily. RNA M5U methyltransferase family.

This is an uncharacterized protein from Streptococcus agalactiae serotype V (strain ATCC BAA-611 / 2603 V/R).